The chain runs to 571 residues: Urease subunit alpha (571 aa).

A Urease domain is found at G132 to F571. Positions 137, 139, and 220 each coordinate Ni(2+). K220 carries the post-translational modification N6-carboxylysine. H222 serves as a coordination point for substrate. H249 and H275 together coordinate Ni(2+). H323 serves as the catalytic Proton donor. Position 363 (D363) interacts with Ni(2+).

Belongs to the metallo-dependent hydrolases superfamily. Urease alpha subunit family. In terms of assembly, heterotrimer of UreA (gamma), UreB (beta) and UreC (alpha) subunits. Three heterotrimers associate to form the active enzyme. Requires Ni cation as cofactor. Post-translationally, carboxylation allows a single lysine to coordinate two nickel ions.

The protein localises to the cytoplasm. It catalyses the reaction urea + 2 H2O + H(+) = hydrogencarbonate + 2 NH4(+). Its pathway is nitrogen metabolism; urea degradation; CO(2) and NH(3) from urea (urease route): step 1/1. This Halalkalibacterium halodurans (strain ATCC BAA-125 / DSM 18197 / FERM 7344 / JCM 9153 / C-125) (Bacillus halodurans) protein is Urease subunit alpha.